The following is a 687-amino-acid chain: Polyphosphate kinase (687 aa).

Asparagine 45 provides a ligand contact to ATP. 2 residues coordinate Mg(2+): arginine 375 and arginine 405. The active-site Phosphohistidine intermediate is histidine 435. The ATP site is built by tyrosine 472, arginine 568, and histidine 596.

Belongs to the polyphosphate kinase 1 (PPK1) family. It depends on Mg(2+) as a cofactor. Post-translationally, an intermediate of this reaction is the autophosphorylated ppk in which a phosphate is covalently linked to a histidine residue through a N-P bond.

It carries out the reaction [phosphate](n) + ATP = [phosphate](n+1) + ADP. Its function is as follows. Catalyzes the reversible transfer of the terminal phosphate of ATP to form a long-chain polyphosphate (polyP). The protein is Polyphosphate kinase of Burkholderia lata (strain ATCC 17760 / DSM 23089 / LMG 22485 / NCIMB 9086 / R18194 / 383).